The sequence spans 160 residues: Ribosomal RNA large subunit methyltransferase H (160 aa).

Leucine 76 and glycine 108 together coordinate S-adenosyl-L-methionine.

It belongs to the RNA methyltransferase RlmH family. Homodimer.

The protein localises to the cytoplasm. It catalyses the reaction pseudouridine(1915) in 23S rRNA + S-adenosyl-L-methionine = N(3)-methylpseudouridine(1915) in 23S rRNA + S-adenosyl-L-homocysteine + H(+). Functionally, specifically methylates the pseudouridine at position 1915 (m3Psi1915) in 23S rRNA. This is Ribosomal RNA large subunit methyltransferase H from Rhodopseudomonas palustris (strain BisB5).